A 290-amino-acid polypeptide reads, in one-letter code: Acetylglutamate kinase (290 aa).

Substrate-binding positions include 60-61 (GG), Arg-82, and Asn-185.

Belongs to the acetylglutamate kinase family. ArgB subfamily.

It localises to the cytoplasm. The catalysed reaction is N-acetyl-L-glutamate + ATP = N-acetyl-L-glutamyl 5-phosphate + ADP. It participates in amino-acid biosynthesis; L-arginine biosynthesis; N(2)-acetyl-L-ornithine from L-glutamate: step 2/4. Functionally, catalyzes the ATP-dependent phosphorylation of N-acetyl-L-glutamate. The sequence is that of Acetylglutamate kinase from Archaeoglobus fulgidus (strain ATCC 49558 / DSM 4304 / JCM 9628 / NBRC 100126 / VC-16).